A 65-amino-acid polypeptide reads, in one-letter code: Large ribosomal subunit protein bL35 (65 aa).

It belongs to the bacterial ribosomal protein bL35 family.

The polypeptide is Large ribosomal subunit protein bL35 (Parabacteroides distasonis (strain ATCC 8503 / DSM 20701 / CIP 104284 / JCM 5825 / NCTC 11152)).